A 477-amino-acid polypeptide reads, in one-letter code: Bifunctional protein HldE (477 aa).

The segment at 1-318 (MKVTLPEFER…ENAVRGRADT (318 aa)) is ribokinase. K179 is modified (N6-acetyllysine). 195–198 (NLSE) contributes to the ATP binding site. The active site involves D264. A cytidylyltransferase region spans residues 344 to 477 (MTNGVFDILH…IKKIQQDKKG (134 aa)).

This sequence in the N-terminal section; belongs to the carbohydrate kinase PfkB family. The protein in the C-terminal section; belongs to the cytidylyltransferase family. In terms of assembly, homodimer.

The catalysed reaction is D-glycero-beta-D-manno-heptose 7-phosphate + ATP = D-glycero-beta-D-manno-heptose 1,7-bisphosphate + ADP + H(+). It catalyses the reaction D-glycero-beta-D-manno-heptose 1-phosphate + ATP + H(+) = ADP-D-glycero-beta-D-manno-heptose + diphosphate. It participates in nucleotide-sugar biosynthesis; ADP-L-glycero-beta-D-manno-heptose biosynthesis; ADP-L-glycero-beta-D-manno-heptose from D-glycero-beta-D-manno-heptose 7-phosphate: step 1/4. Its pathway is nucleotide-sugar biosynthesis; ADP-L-glycero-beta-D-manno-heptose biosynthesis; ADP-L-glycero-beta-D-manno-heptose from D-glycero-beta-D-manno-heptose 7-phosphate: step 3/4. Its function is as follows. Catalyzes the phosphorylation of D-glycero-D-manno-heptose 7-phosphate at the C-1 position to selectively form D-glycero-beta-D-manno-heptose-1,7-bisphosphate. In terms of biological role, catalyzes the ADP transfer from ATP to D-glycero-beta-D-manno-heptose 1-phosphate, yielding ADP-D-glycero-beta-D-manno-heptose. The polypeptide is Bifunctional protein HldE (Escherichia coli (strain 55989 / EAEC)).